Consider the following 181-residue polypeptide: Shikimate kinase (181 aa).

17–22 (GAGKTT) is an ATP binding site. Thr21 is a binding site for Mg(2+). Residues Asp39, Arg63, and Gly85 each contribute to the substrate site. Arg122 contributes to the ATP binding site. Residue Arg141 participates in substrate binding.

This sequence belongs to the shikimate kinase family. In terms of assembly, monomer. The cofactor is Mg(2+).

Its subcellular location is the cytoplasm. It carries out the reaction shikimate + ATP = 3-phosphoshikimate + ADP + H(+). It participates in metabolic intermediate biosynthesis; chorismate biosynthesis; chorismate from D-erythrose 4-phosphate and phosphoenolpyruvate: step 5/7. Functionally, catalyzes the specific phosphorylation of the 3-hydroxyl group of shikimic acid using ATP as a cosubstrate. The sequence is that of Shikimate kinase from Trichormus variabilis (strain ATCC 29413 / PCC 7937) (Anabaena variabilis).